A 221-amino-acid chain; its full sequence is Thiopurine S-methyltransferase (221 aa).

S-adenosyl-L-methionine is bound by residues W12, L47, E68, and R125.

It belongs to the class I-like SAM-binding methyltransferase superfamily. TPMT family.

It localises to the cytoplasm. The catalysed reaction is S-adenosyl-L-methionine + a thiopurine = S-adenosyl-L-homocysteine + a thiopurine S-methylether.. The sequence is that of Thiopurine S-methyltransferase from Legionella pneumophila subsp. pneumophila (strain Philadelphia 1 / ATCC 33152 / DSM 7513).